We begin with the raw amino-acid sequence, 79 residues long: Calcium/calmodulin-dependent protein kinase II inhibitor 2 (79 aa).

The segment at 43–69 (KRPPKLGQIGRAKRVVIEDDRIDEVLK) is inhibitory domain.

It belongs to the CAMK2N family.

The protein resides in the nucleus. The protein localises to the cytoplasm. It is found in the cytosol. Functionally, potent and specific cellular inhibitor of CaM-kinase II (CAMK2). Traps Ca(2+)/calmodulin on CAMK2. In Xenopus laevis (African clawed frog), this protein is Calcium/calmodulin-dependent protein kinase II inhibitor 2 (camk2n2).